Here is a 120-residue protein sequence, read N- to C-terminus: Large ribosomal subunit protein uL22 (120 aa).

The protein belongs to the universal ribosomal protein uL22 family. As to quaternary structure, part of the 50S ribosomal subunit.

This protein binds specifically to 23S rRNA; its binding is stimulated by other ribosomal proteins, e.g. L4, L17, and L20. It is important during the early stages of 50S assembly. It makes multiple contacts with different domains of the 23S rRNA in the assembled 50S subunit and ribosome. Its function is as follows. The globular domain of the protein is located near the polypeptide exit tunnel on the outside of the subunit, while an extended beta-hairpin is found that lines the wall of the exit tunnel in the center of the 70S ribosome. This Corynebacterium efficiens (strain DSM 44549 / YS-314 / AJ 12310 / JCM 11189 / NBRC 100395) protein is Large ribosomal subunit protein uL22.